A 458-amino-acid chain; its full sequence is V-type ATP synthase beta chain (458 aa).

It belongs to the ATPase alpha/beta chains family.

Its function is as follows. Produces ATP from ADP in the presence of a proton gradient across the membrane. The V-type beta chain is a regulatory subunit. The chain is V-type ATP synthase beta chain from Fusobacterium nucleatum subsp. nucleatum (strain ATCC 25586 / DSM 15643 / BCRC 10681 / CIP 101130 / JCM 8532 / KCTC 2640 / LMG 13131 / VPI 4355).